The primary structure comprises 325 residues: MPDSGLLYKEWRQNKVALVITILVFILGNPLSILNMYLIYQGCVTGKENWVGPCVFSVDYLNSSFISLFWIWGVVLAVSQLGIERSKSFFDFTLSLPYTRGQIFHAKFLTGGMVIVVPQLIGYVLSVLLIMLLKPDQAVYFHNYSLGMIIVSMLAYSLVMAGGALTGNSFAQLLVSFTVAISPFLLISLPVINLEILFGGSIDFIHGPVPKWVQYFIPIIYVDSKWAENSPYYLVIPAIMTIIFYIIGYISFVKMSNERNGYFFLWKPLNRPVQIIVIIIGIMGFGYFGFTASESFAGYLIGMGTGAVIGFLISYFAIYKKMKLL.

8 helical membrane passes run 16-36 (VALV…ILNM), 63-83 (SSFI…QLGI), 113-133 (MVIV…IMLL), 146-166 (LGMI…GALT), 179-199 (VAIS…ILFG), 233-253 (YLVI…ISFV), 272-292 (PVQI…GFTA), and 298-318 (GYLI…YFAI).

It belongs to the ABC-5 integral membrane protein family. In terms of assembly, the complex is composed of 2 ATP-binding proteins (YtrB and YtrE), 2 transmembrane proteins (YtrC and YtrD) and a solute-binding protein (YtrF).

It is found in the cell membrane. Functionally, part of the ABC transporter complex YtrBCDEF that plays a role in acetoin utilization during stationary phase and sporulation. The sequence is that of Probable ABC transporter permease YtrD (ytrD) from Bacillus subtilis (strain 168).